Consider the following 1235-residue polypeptide: MLLKLLQRQTYTCLSHRYGLYVCFVGVVVTIVSAFQFGEVVLEWSRDQYHVLFDSYRDNIAGKSFQNRLCLPMPIDVVYTWVNGTDLELLKELQQVREHMEEEQRAMRETLGKNTTEPTKKSEKQLECLLTHCIKVPMLVLDPPLPANCTLKDLPTLYPSFHAASDMFNVAKPKNPSTNVSVVVFDTTKDVEDAHAGPFKGGSKQMVWRAYLTTDKEAPGLVLMQGLAFLSGFPPTFKETSQLKTKLPEKLSSKIKLLRLYSEASVALLKLNNPKGFQELNKQTKKNMTIDGKELTISPAYLLWDLSAISQSKQDEDVSASRFEDNEELRYSLRSIERHAPWVRNIFIVTNGQIPSWLNLDNPRVTIVTHQDIFQNLSHLPTFSSPAIESHIHRIEGLSQKFIYLNDDVMFGKDVWPDDFYSHSKGQKVYLTWPVPNCAEGCPGSWIKDGYCDKACNNSACDWDGGDCSGNTAGNRFVAGGGGTGNIGAGQHWQFGGGINTISYCNQGCANSWLADKFCDQACNVLSCGFDAGDCGQDHFHELYKVTLLPNQTHYVVPKGEYLSYFSFANIARRGVEGTYSDNPIIRHASIANKWKTIHLIMHSGMNATTIYFNLTLQNANDEEFKIQIAVEVDTREAPKLNSTTQKAYESLVSPVTPLPQADVPFEDVPKEKRFPKIRRHDVNATGRFQEEVKIPRVNISLLPKEAQVRLSNLDLQLERGDITLKGYNLSKSALLRSFLGNSLDTKIKPQARTDETKGNLEVPQENPSHRRPHGFAGEHRSERWTAPAETVTVKGRDHALNPPPVLETNARLAQPTLGVTVSKENLSPLIVPPESHLPKEEESDRAEGNAVPVKELVPGRRLQQNYPGFLPWEKKKYFQDLLDEEESLKTQLAYFTDSKHTGRQLKDTFADSLRYVNKILNSKFGFTSRKVPAHMPHMIDRIVMQELQDMFPEEFDKTSFHKVRHSEDMQFAFSYFYYLMSAVQPLNISQVFHEVDTDQSGVLSDREIRTLATRIHDLPLSLQDLTGLEHMLINCSKMLPANITQLNNIPPTQEAYYDPNLPPVTKSLVTNCKPVTDKIHKAYKDKNKYRFEIMGEEEIAFKMIRTNVSHVVGQLDDIRKNPRKFVCLNDNIDHNHKDARTVKAVLRDFYESMFPIPSQFELPREYRNRFLHMHELQEWRAYRDKLKFWTHCVLATLIIFTIFSFFAEQIIALKRKIFPRRRIHKEASPDRIRV.

Residues 22–42 (VCFVGVVVTIVSAFQFGEVVL) form a helical membrane-spanning segment. Asn-83, Asn-114, Asn-148, and Asn-179 each carry an N-linked (GlcNAc...) asparagine glycan. Disulfide bonds link Cys-438/Cys-461, Cys-452/Cys-468, Cys-505/Cys-528, and Cys-519/Cys-535. LNR repeat units follow at residues 438 to 473 (CAEG…GNTA) and 505 to 545 (CNQG…ELYK). Positions 449, 464, 467, 516, 531, and 534 each coordinate Ca(2+). 2 N-linked (GlcNAc...) asparagine glycosylation sites follow: Asn-614 and Asn-729. The DMAP1-binding domain occupies 699-823 (NISLLPKEAQ…AQPTLGVTVS (125 aa)). Disordered stretches follow at residues 751–783 (QART…HRSE) and 830–850 (LIVP…AEGN). Basic and acidic residues predominate over residues 837-848 (HLPKEEESDRAE). Residues 984-1019 (VQPLNISQVFHEVDTDQSGVLSDREIRTLATRIHDL) form the EF-hand domain. N-linked (GlcNAc...) asparagine glycosylation is present at Asn-988. Asp-997, Asp-999, Ser-1001, and Glu-1008 together coordinate Ca(2+). An N-linked (GlcNAc...) asparagine glycan is attached at Asn-1108. The chain crosses the membrane as a helical span at residues 1194 to 1214 (VLATLIIFTIFSFFAEQIIAL).

The protein belongs to the stealth family. In terms of assembly, hexamer of two alpha, two beta and two gamma (GNPTG) subunits; disulfide-linked. The alpha and/or the beta subunits of the enzyme constitute the catalytic subunits. Interacts with LYSET; facilitates proper localization of GNPTAB. Post-translationally, the alpha- and beta-subunits are generated by a proteolytic cleavage by MBTPS1 protease at the Lys-907-Asp-908 bond.

The protein resides in the golgi apparatus membrane. The catalysed reaction is N(4)-[alpha-D-mannosyl-(1-&gt;2)-alpha-D-mannosyl-(glycan)]-L-asparaginyl-[protein] + UDP-N-acetyl-alpha-D-glucosamine = N(4)-[6-(N-acetyl-alpha-D-glucosaminyl-1-phospho)-alpha-D-mannosyl-(1-&gt;2)-alpha-D-mannosyl-(glycan)]-L-asparaginyl-[protein] + UMP + H(+). Functionally, catalyzes the formation of mannose 6-phosphate (M6P) markers on high mannose type oligosaccharides in the Golgi apparatus. M6P residues are required to bind to the M6P receptors (MPR), which mediate the vesicular transport of lysosomal enzymes to the endosomal/prelysosomal compartment. The polypeptide is N-acetylglucosamine-1-phosphotransferase subunits alpha/beta (Gnptab) (Mus musculus (Mouse)).